A 216-amino-acid polypeptide reads, in one-letter code: Imidazole glycerol phosphate synthase subunit HisH (216 aa).

The region spanning 2–216 (RVAIIDYGSG…LIANFLKWKP (215 aa)) is the Glutamine amidotransferase type-1 domain. Catalysis depends on Cys-88, which acts as the Nucleophile. Catalysis depends on residues His-196 and Glu-198.

Heterodimer of HisH and HisF.

It localises to the cytoplasm. It catalyses the reaction 5-[(5-phospho-1-deoxy-D-ribulos-1-ylimino)methylamino]-1-(5-phospho-beta-D-ribosyl)imidazole-4-carboxamide + L-glutamine = D-erythro-1-(imidazol-4-yl)glycerol 3-phosphate + 5-amino-1-(5-phospho-beta-D-ribosyl)imidazole-4-carboxamide + L-glutamate + H(+). The enzyme catalyses L-glutamine + H2O = L-glutamate + NH4(+). The protein operates within amino-acid biosynthesis; L-histidine biosynthesis; L-histidine from 5-phospho-alpha-D-ribose 1-diphosphate: step 5/9. Its function is as follows. IGPS catalyzes the conversion of PRFAR and glutamine to IGP, AICAR and glutamate. The HisH subunit catalyzes the hydrolysis of glutamine to glutamate and ammonia as part of the synthesis of IGP and AICAR. The resulting ammonia molecule is channeled to the active site of HisF. The protein is Imidazole glycerol phosphate synthase subunit HisH of Brucella abortus biovar 1 (strain 9-941).